A 622-amino-acid chain; its full sequence is Sodium/potassium/calcium exchanger 4 (622 aa).

The N-terminal stretch at 1–38 (MALRGTLRPLKVRRRREMLPQQVGFVCAVLALVCCASG) is a signal peptide. The Extracellular segment spans residues 39–97 (LFGSLGHKTASASKRVLPDTWRNRKLMAPVNGTQTAKNCTDPAIHEFPTDLFSNKERQH). N-linked (GlcNAc...) asparagine glycosylation is found at N69 and N76. Residues 98 to 118 (GAVLLHILGALYMFYALAIVC) form a helical membrane-spanning segment. The Cytoplasmic portion of the chain corresponds to 119-142 (DDFFVPSLEKICERLHLSEDVAGA). An Alpha-1 repeat occupies 139–179 (VAGATFMAAGSSTPELFASVIGVFITHGDVGVGTIVGSAVF). A helical membrane pass occupies residues 143-163 (TFMAAGSSTPELFASVIGVFI). The Extracellular segment spans residues 164–172 (THGDVGVGT). A helical transmembrane segment spans residues 173-193 (IVGSAVFNILCIIGVCGLFAG). The Cytoplasmic portion of the chain corresponds to 194-200 (QVVRLTW). The chain crosses the membrane as a helical span at residues 201 to 221 (WAVCRDSVYYTISVIVLIVFI). Residues 222–224 (YDE) are Extracellular-facing. Residues 225 to 245 (QIVWWEGLVLIILYVFYILIM) form a helical membrane-spanning segment. The Cytoplasmic portion of the chain corresponds to 246–457 (KYNVKMQAFF…RWEKFFMVTF (212 aa)). The interval 358–410 (ANGVSSKPLQNGRHENIENGNVPVENPEDPQQNQEQQPPPQPPPPEPEPVEAD) is disordered. Residues 380–393 (PVENPEDPQQNQEQ) show a composition bias toward low complexity. Pro residues predominate over residues 394 to 404 (QPPPQPPPPEP). A helical membrane pass occupies residues 458–478 (ITATLWIAVFSYIMVWLVTII). G479 is a topological domain (extracellular). The chain crosses the membrane as a helical span at residues 480–500 (YTLGIPDVIMGITFLAAGTSV). The stretch at 495-526 (AAGTSVPDCMASLIVARQGLGDMAVSNTIGSN) is one Alpha-2 repeat. The Cytoplasmic portion of the chain corresponds to 501 to 526 (PDCMASLIVARQGLGDMAVSNTIGSN). A helical membrane pass occupies residues 527 to 547 (VFDILVGLGVPWGLQTMVVNY). The Extracellular portion of the chain corresponds to 548-557 (GSTVKINSRG). A helical transmembrane segment spans residues 558–578 (LVYSVVLLLGSVALTVLGIHL). Topologically, residues 579-586 (NKWRLDRK) are cytoplasmic. The chain crosses the membrane as a helical span at residues 587–607 (LGVYVLVLYAIFLCFSIMIEF). The Extracellular segment spans residues 608 to 622 (NVFTFVNLPMCREDD).

Belongs to the Ca(2+):cation antiporter (CaCA) (TC 2.A.19) family. SLC24A subfamily. As to expression, expressed abundantly in all regions of the brain, aorta, lung and thymus. Expressed at lower levels in the stomach and intestine.

It is found in the cell membrane. Its subcellular location is the cytoplasm. It catalyses the reaction Ca(2+)(out) + K(+)(out) + 4 Na(+)(in) = Ca(2+)(in) + K(+)(in) + 4 Na(+)(out). Calcium, potassium:sodium antiporter that transports 1 Ca(2+) and 1 K(+) in exchange for 4 Na(+). Controls the rapid response termination and proper regulation of adaptation in olfactory sensory neurons (OSNs) which subsequently influences how odor information is encoded and perceived. May play a role in calcium transport during amelogenesis. This is Sodium/potassium/calcium exchanger 4 from Homo sapiens (Human).